Here is a 178-residue protein sequence, read N- to C-terminus: Ribulose bisphosphate carboxylase small subunit, chloroplastic 2 (178 aa).

The N-terminal 54 residues, methionine 1–glutamine 54, are a transit peptide targeting the chloroplast.

Belongs to the RuBisCO small chain family. In terms of assembly, heterohexadecamer of 8 large and 8 small subunits.

It is found in the plastid. The protein localises to the chloroplast. Its function is as follows. RuBisCO catalyzes two reactions: the carboxylation of D-ribulose 1,5-bisphosphate, the primary event in carbon dioxide fixation, as well as the oxidative fragmentation of the pentose substrate. Both reactions occur simultaneously and in competition at the same active site. Although the small subunit is not catalytic it is essential for maximal activity. The protein is Ribulose bisphosphate carboxylase small subunit, chloroplastic 2 of Flaveria pringlei.